The primary structure comprises 229 residues: Synaptogyrin-3 (229 aa).

Methionine 1 carries the N-acetylmethionine modification. The MARVEL domain maps to 20–172 (FARRPQTLLR…LTVKALQRFR (153 aa)). 4 helical membrane-spanning segments follow: residues 30–50 (VVSW…GYVN), 70–90 (FGVV…LLDV), 105–125 (VLLD…GFCF), and 148–168 (AAIA…VKAL). A compositionally biased stretch (polar residues) spans 209-223 (QSPPFTETLDTSSKG). A disordered region spans residues 209–229 (QSPPFTETLDTSSKGYQVPAY).

It belongs to the synaptogyrin family. As to quaternary structure, interacts (via N-terminus) with SLC6A3 (via N-terminus). May interact with VMAT2. As to expression, specifically expressed in brain. Found in the brain across the dorsal and ventral corpus striatum as well as in the cortex.

It is found in the cytoplasmic vesicle. It localises to the secretory vesicle. The protein resides in the synaptic vesicle membrane. The protein localises to the synapse. Functionally, may play a role in regulated exocytosis. May indirectly regulate the activity of the plasma membrane dopamine transporter SLC6A3 and thereby regulate dopamine transport back from the synaptic cleft into the presynaptic terminal. The chain is Synaptogyrin-3 from Mus musculus (Mouse).